A 269-amino-acid polypeptide reads, in one-letter code: MVKISFQPAVAGIKGDKADKASASASAPAPAPAAEILLTPAREERPPHHRYKKGSSVGGVCYLSMGMVVLLMGLVFASVYIYRYFFLAQLARDNFFHCGVLYEDSLSSQARTRMELEEDVKIYLEENYERINVPVPQFGGGDPADIIHDFQRGLTAYHDISLDKCYVIELNTTIVLPPRNFWELLMNVKRGTYLPQTYIIQEEMVVTEHVSDKEALGSFIYHLCNGKDTYRLRRRATRRRINKRGAKNCNAIRHFENTFVVETLICGVV.

Threonine 39 carries the phosphothreonine modification. A helical; Signal-anchor for type II membrane protein transmembrane segment spans residues 57–77 (VGGVCYLSMGMVVLLMGLVFA). One can recognise a BRICHOS domain in the interval 138–232 (FGGGDPADII…LCNGKDTYRL (95 aa)). Cysteine 165 and cysteine 224 are oxidised to a cystine. Residue asparagine 171 is glycosylated (N-linked (GlcNAc...) asparagine).

Belongs to the ITM2 family. In terms of assembly, interacts with BACE1. Interacts with APP. Interacts with STMN2. Type I membrane-bound, as well as soluble, furin has a pre-eminent role in ITM2C proteolytic processing. PCSK7 and PCSK5 may also be involved although to a lesser extent. The soluble form of PCSK7 is incapable of processing ITM2C. Fails to undergo shedding by ADAM10 and intramembrane cleavage by SPPL2B.

The protein resides in the lysosome membrane. Its subcellular location is the cell membrane. Negative regulator of amyloid-beta peptide production. May inhibit the processing of APP by blocking its access to alpha- and beta-secretase. Binding to the beta-secretase-cleaved APP C-terminal fragment is negligible, suggesting that ITM2C is a poor gamma-secretase cleavage inhibitor. May play a role in TNF-induced cell death and neuronal differentiation. This chain is Integral membrane protein 2C (ITM2C), found in Sus scrofa (Pig).